The primary structure comprises 302 residues: Deoxyhypusine hydroxylase (302 aa).

Met1 carries the post-translational modification N-acetylmethionine. HEAT-like PBS-type repeat units follow at residues 54 to 80 (LKHELAYCLGQMRDPRAIPVLVSVLQD), 87 to 113 (VRHEAGEALGAIGNPKVLGLLKQYSTD), 175 to 201 (ERYRAMFALRNVGGKEAALALAEGLKC), 206 to 232 (FRHEVGYVLGQLQHEAAVSELAATLAR), and 239 to 265 (VRHECAEALGAIARPACLAALREYITD). His56, His89, and Glu90 together coordinate Fe cation. 3 residues coordinate Fe cation: His208, His241, and Glu242.

Belongs to the deoxyhypusine hydroxylase family. It depends on Fe(2+) as a cofactor.

It carries out the reaction [eIF5A protein]-deoxyhypusine + AH2 + O2 = [eIF5A protein]-hypusine + A + H2O. The protein operates within protein modification; eIF5A hypusination. Its function is as follows. Catalyzes the hydroxylation of the N(6)-(4-aminobutyl)-L-lysine intermediate produced by deoxyhypusine synthase/DHPS on a critical lysine of the eukaryotic translation initiation factor 5A/eIF-5A. This is the second step of the post-translational modification of that lysine into an unusual amino acid residue named hypusine. Hypusination is unique to mature eIF-5A factor and is essential for its function. In Rattus norvegicus (Rat), this protein is Deoxyhypusine hydroxylase (Dohh).